The following is a 519-amino-acid chain: Major facilitator superfamily domain-containing protein 8 (519 aa).

The interval 1–25 is disordered; that stretch reads MANLGSEAEREPLLGPGSPGSREWS. Residues 1–41 are Cytoplasmic-facing; sequence MANLGSEAEREPLLGPGSPGSREWSEIETQEHYKSRWKSVR. The Dileucine internalization motif signature appears at 13-14; the sequence is LL. A helical transmembrane segment spans residues 42–62; the sequence is ILYLTMFLSSVGFSIVIMSIW. The Extracellular portion of the chain corresponds to 63–75; the sequence is PYLQKIDQTADAS. A helical membrane pass occupies residues 76 to 96; it reads FLGWVIASYSLGQMVASPLFG. Over 97-106 the chain is Cytoplasmic; it reads LWSNYRPRKE. The chain crosses the membrane as a helical span at residues 107–127; that stretch reads PLIVSISISVAANCLYAYVHV. The Extracellular segment spans residues 128–140; it reads PAAHNKYYMLIAR. A helical transmembrane segment spans residues 141-161; the sequence is GLVGFGAGNVAVVRSYIAGAT. Residues 162–174 lie on the Cytoplasmic side of the membrane; that stretch reads SLQERTNAMANTS. A helical membrane pass occupies residues 175–195; it reads TCQALGFILGPVFQTCFALIG. At 196 to 212 the chain is on the extracellular side; it reads EKGVTWDIIKLQVNMYT. A helical membrane pass occupies residues 213–233; it reads APVLLAAFLGILNIILILFIL. Over 234–267 the chain is Cytoplasmic; sequence REHRVDDLGRQCKSVNFQEENTDEPQIPEGSIDQ. The helical transmembrane segment at 268–288 threads the bilayer; the sequence is VAVVATNIVFFVVLFIFAVYE. Over 289–310 the chain is Extracellular; sequence TILTPLTLDMYAWTQEQAVLYD. The helical transmembrane segment at 311–331 threads the bilayer; it reads GILLVAFGVEAVLVFMGVKLL. Over 332-338 the chain is Cytoplasmic; it reads SKKIGER. A helical transmembrane segment spans residues 339 to 359; it reads AILLGGFVVVWVGFFILLPWG. Topologically, residues 360-416 are extracellular; it reads NQFPKIQWEDLHNSSTPNTTFGEIIIGLWNSSREDHSEQPTGCPIEQTWCLYTPVIH. 2 N-linked (GlcNAc...) asparagine glycosylation sites follow: asparagine 372 and asparagine 377. The helical transmembrane segment at 417–439 threads the bilayer; the sequence is LAQFLTAAVLIGTGYPACSVMSY. Residues 440–452 lie on the Cytoplasmic side of the membrane; that stretch reads TLYSKVLGPKPQG. Residues 453-473 traverse the membrane as a helical segment; the sequence is IYMGWLTTSGSAARILGPVFI. Topologically, residues 474–483 are extracellular; sequence SHVYTYLGPR. A helical transmembrane segment spans residues 484 to 504; sequence WAFSLVCGIVVLTILLIGAVY. At 505 to 519 the chain is on the cytoplasmic side; the sequence is KRLVAFSVRYMRIQE.

It belongs to the major facilitator superfamily.

It is found in the endosome membrane. The protein localises to the lysosome membrane. It catalyses the reaction chloride(in) = chloride(out). The catalysed reaction is iodide(out) = iodide(in). It carries out the reaction fluoride(in) = fluoride(out). Outward-rectifying chloride channel involved in endolysosomal chloride homeostasis, membrane fusion and function. Conducts chloride currents up to hundreds of picoamperes. Regulates lysosomal calcium content by reducing the lysosomal membrane potential, thereby activating TRPML1 channel and further release of lysosomal calcium ions. Regulates the pH in endolysosomal compartments and may contribute to progressive acidification from endosome to lysosome. Permeable to other halides such as iodide and fluoride ions. This Mus musculus (Mouse) protein is Major facilitator superfamily domain-containing protein 8.